A 378-amino-acid chain; its full sequence is Phosphoglycerate kinase (378 aa).

14 residues coordinate (2R)-3-phosphoglycerate: Val1, Asp2, Phe3, Asn4, Asn16, Arg17, Ser40, His41, Gly43, Arg44, Leu99, Arg100, His147, and Arg148. Gly191 lines the ADP pocket. Residue Gly191 participates in CDP binding. The AMP site is built by Ala192 and Lys193. Ala192 lines the ATP pocket. Ala192 serves as a coordination point for Mg(2+). CDP is bound at residue Asp196. Asp196 is a binding site for Mg(2+). Lys197 provides a ligand contact to AMP. Residue Lys197 participates in ATP binding. Residue Gly215 participates in ADP binding. Position 215 (Gly215) interacts with CDP. AMP is bound by residues Gly216 and Gly288. Gly216 and Gly288 together coordinate ATP. CDP-binding residues include Gly313 and Phe318. Phe318 is an ADP binding site. AMP is bound at residue Glu319. The ATP site is built by Glu319, Asp351, and Thr352. Asp351 is a binding site for Mg(2+).

It belongs to the phosphoglycerate kinase family. In terms of assembly, monomer. Requires Mg(2+) as cofactor.

The enzyme catalyses (2R)-3-phosphoglycerate + ATP = (2R)-3-phospho-glyceroyl phosphate + ADP. It functions in the pathway carbohydrate degradation; glycolysis; pyruvate from D-glyceraldehyde 3-phosphate: step 2/5. In Condylostoma magnum, this protein is Phosphoglycerate kinase (PGK).